The following is a 341-amino-acid chain: Phosphate acyltransferase (341 aa).

The protein belongs to the PlsX family. Homodimer. Probably interacts with PlsY.

The protein resides in the cytoplasm. The enzyme catalyses a fatty acyl-[ACP] + phosphate = an acyl phosphate + holo-[ACP]. It participates in lipid metabolism; phospholipid metabolism. Catalyzes the reversible formation of acyl-phosphate (acyl-PO(4)) from acyl-[acyl-carrier-protein] (acyl-ACP). This enzyme utilizes acyl-ACP as fatty acyl donor, but not acyl-CoA. The sequence is that of Phosphate acyltransferase from Lacticaseibacillus casei (strain BL23) (Lactobacillus casei).